The following is a 151-amino-acid chain: Ribosomal RNA large subunit methyltransferase H (151 aa).

S-adenosyl-L-methionine contacts are provided by residues glycine 100 and 119–124; that span reads LSRMTF.

The protein belongs to the RNA methyltransferase RlmH family. As to quaternary structure, homodimer.

It is found in the cytoplasm. It carries out the reaction pseudouridine(1915) in 23S rRNA + S-adenosyl-L-methionine = N(3)-methylpseudouridine(1915) in 23S rRNA + S-adenosyl-L-homocysteine + H(+). Specifically methylates the pseudouridine at position 1915 (m3Psi1915) in 23S rRNA. The chain is Ribosomal RNA large subunit methyltransferase H from Thermotoga neapolitana (strain ATCC 49049 / DSM 4359 / NBRC 107923 / NS-E).